We begin with the raw amino-acid sequence, 729 residues long: Monosaccharide-sensing protein 3 (729 aa).

6 helical membrane-spanning segments follow: residues 5–25 (VLVA…NATI), 46–66 (GLIV…SGPV), 81–101 (VLYF…VLLF), 104–124 (LLDG…ISET), 135–155 (TFPQ…VFGM), and 165–185 (LMLG…AFFL). Positions 337-372 (QESQWDPERNNEDSSDQDENLNSPLLSPQTTEPDDY) are disordered. Over residues 356–367 (NLNSPLLSPQTT) the composition is skewed to polar residues. S446 carries the phosphoserine modification. Transmembrane regions (helical) follow at residues 511–531 (ALMV…NGVM), 557–577 (ASLL…LVSM), 581–601 (MLST…GSLV), 610–630 (LIST…FGAI), 650–670 (ICAL…PVML), and 673–693 (IGIA…WVFV).

The protein belongs to the major facilitator superfamily. Sugar transporter (TC 2.A.1.1) family. Weakly expressed.

Its subcellular location is the vacuole membrane. It carries out the reaction D-glucose(out) + H(+)(in) = D-glucose(in) + H(+)(out). It catalyses the reaction sucrose(out) + H(+)(in) = sucrose(in) + H(+)(out). Its function is as follows. Sugar proton-coupled antiporter which contributes to vacuolar sugar import (e.g. monosaccharides including glucose,sucrose and fructose), particularly during stress responses (e.g. in response to cold). This Arabidopsis thaliana (Mouse-ear cress) protein is Monosaccharide-sensing protein 3.